The primary structure comprises 821 residues: Fibroblast growth factor receptor 2 (821 aa).

The signal sequence occupies residues 1–21 (MVSWGRFICLVLVTMATLSLA). The Extracellular segment spans residues 22–377 (RPSFSLVEDT…EITASPDYLE (356 aa)). Residues 25 to 125 (FSLVEDTTLE…ETWIFMVNVT (101 aa)) enclose the Ig-like C2-type 1 domain. Cysteine 62 and cysteine 107 are oxidised to a cystine. N-linked (GlcNAc...) asparagine glycans are attached at residues asparagine 83 and asparagine 123. A disordered region spans residues 129–151 (SSGDDEDDTDSSEDVVSENRSNQ). Over residues 131–144 (GDDEDDTDSSEDVV) the composition is skewed to acidic residues. N-linked (GlcNAc...) asparagine glycosylation occurs at asparagine 147. 2 consecutive Ig-like C2-type domains span residues 154–247 (PYWT…YHLD) and 256–358 (PILQ…AWLT). Residues 161-178 (KMEKRLHACPAANTVKFR) form a heparin-binding region. A disulfide bond links cysteine 179 and cysteine 231. Asparagine 228, asparagine 241, asparagine 265, asparagine 297, asparagine 318, and asparagine 331 each carry an N-linked (GlcNAc...) asparagine glycan. Cysteine 278 and cysteine 342 are oxidised to a cystine. A helical transmembrane segment spans residues 378–398 (IAIYCIGVFLIACMVVTVIFC). Topologically, residues 399-821 (RMKTTTKKPD…YPHINGSVKT (423 aa)) are cytoplasmic. Residue tyrosine 466 is modified to Phosphotyrosine; by autocatalysis. A Protein kinase domain is found at 481 to 770 (LTLGKPLGEG…LTLTTNEEYL (290 aa)). ATP is bound by residues 487 to 495 (LGEGCFGQV), lysine 517, 565 to 567 (EYA), and asparagine 571. A phosphotyrosine; by autocatalysis mark is found at tyrosine 586 and tyrosine 588. The Proton acceptor role is filled by aspartate 626. Residues tyrosine 656, tyrosine 657, and tyrosine 769 each carry the phosphotyrosine; by autocatalysis modification. Position 780 is a phosphoserine (serine 780).

Belongs to the protein kinase superfamily. Tyr protein kinase family. Fibroblast growth factor receptor subfamily. Monomer. Homodimer after ligand binding. Interacts predominantly with FGF1 and FGF2, but can also interact with FGF3, FGF4, FGF6, FGF7, FGF8, FGF9, FGF10, FGF17, FGF18 and FGF22 (in vitro). Ligand specificity is determined by tissue-specific expression of isoforms, and differences in the third Ig-like domain are crucial for ligand specificity. Affinity for fibroblast growth factors (FGFs) is increased by heparan sulfate glycosaminoglycans that function as coreceptors. Likewise, KLB increases the affinity for FGF19 and FGF21. Interacts with PLCG1. Interacts with GRB2 and PAK4. Interacts with FLRT2. Autophosphorylated. Binding of FGF family members together with heparan sulfate proteoglycan or heparin promotes receptor dimerization and autophosphorylation on tyrosine residues. Autophosphorylation occurs in trans between the two FGFR molecules present in the dimer. In terms of processing, N-glycosylated in the endoplasmic reticulum. The N-glycan chains undergo further maturation to an Endo H-resistant form in the Golgi apparatus. Post-translationally, ubiquitinated. FGFR2 is rapidly ubiquitinated after autophosphorylation, leading to internalization and degradation. Subject to degradation both in lysosomes and by the proteasome.

It is found in the cell membrane. The protein resides in the golgi apparatus. Its subcellular location is the cytoplasmic vesicle. The enzyme catalyses L-tyrosyl-[protein] + ATP = O-phospho-L-tyrosyl-[protein] + ADP + H(+). Present in an inactive conformation in the absence of bound ligand. Ligand binding leads to dimerization and activation by autophosphorylation on tyrosine residues. Its function is as follows. Tyrosine-protein kinase that acts as a cell-surface receptor for fibroblast growth factors and plays an essential role in the regulation of cell proliferation, differentiation, migration and apoptosis, and in the regulation of embryonic development. Required for normal embryonic patterning, trophoblast function, limb bud development, lung morphogenesis, osteogenesis and skin development. Plays an essential role in the regulation of osteoblast differentiation, proliferation and apoptosis, and is required for normal skeleton development. Promotes cell proliferation in keratinocytes and immature osteoblasts, but promotes apoptosis in differentiated osteoblasts. Phosphorylates PLCG1, FRS2 and PAK4. Ligand binding leads to the activation of several signaling cascades. Activation of PLCG1 leads to the production of the cellular signaling molecules diacylglycerol and inositol 1,4,5-trisphosphate. Phosphorylation of FRS2 triggers recruitment of GRB2, GAB1, PIK3R1 and SOS1, and mediates activation of RAS, MAPK1/ERK2, MAPK3/ERK1 and the MAP kinase signaling pathway, as well as of the AKT1 signaling pathway. FGFR2 signaling is down-regulated by ubiquitination, internalization and degradation. Mutations that lead to constitutive kinase activation or impair normal FGFR2 maturation, internalization and degradation lead to aberrant signaling. Over-expressed FGFR2 promotes activation of STAT1. This chain is Fibroblast growth factor receptor 2 (Fgfr2), found in Mus musculus (Mouse).